We begin with the raw amino-acid sequence, 607 residues long: T-box transcription factor TBX18 (607 aa).

Positions 18–28 match the Engrailed homology 1 repressor motif; sequence HAFSVEALIGA. Residues 30 to 141 are disordered; sequence KQQQLQKKRR…PLPSPQAPRV (112 aa). The Nuclear localization signal motif lies at 36–40; sequence KKRRK. The segment covering 44-53 has biased composition (low complexity); that stretch reads EEAAGAVDDG. Positions 143-330 form a DNA-binding region, T-box; that stretch reads LQGAELWKRF…RNPFAKGFRD (188 aa).

In terms of assembly, homodimer. Can form a heterodimer with TBX15. Interacts with GATA4 and NKX2-5. Interacts with PAX3. Interacts (via engrailed homology 1 repressor motif) with TLE3; this interaction represses TBX18 transcriptional activity. Interacts with SIX1.

It is found in the nucleus. Its function is as follows. Acts as a transcriptional repressor involved in developmental processes of a variety of tissues and organs, including the heart and coronary vessels, the ureter and the vertebral column. Required for embryonic development of the sino atrial node (SAN) head area. This Homo sapiens (Human) protein is T-box transcription factor TBX18 (TBX18).